The following is a 154-amino-acid chain: Ribonuclease H (154 aa).

The region spanning 9-150 (SHPHIIIYTD…ADALANKGVE (142 aa)) is the RNase H type-1 domain. The Mg(2+) site is built by Asp18, Glu56, Asp78, and Asp142.

The protein belongs to the RNase H family. In terms of assembly, monomer. The cofactor is Mg(2+).

The protein localises to the cytoplasm. It catalyses the reaction Endonucleolytic cleavage to 5'-phosphomonoester.. In terms of biological role, endonuclease that specifically degrades the RNA of RNA-DNA hybrids. The sequence is that of Ribonuclease H from Polynucleobacter asymbioticus (strain DSM 18221 / CIP 109841 / QLW-P1DMWA-1) (Polynucleobacter necessarius subsp. asymbioticus).